Reading from the N-terminus, the 180-residue chain is Crossover junction endodeoxyribonuclease RuvC (180 aa).

Residues Asp-7, Glu-66, and Asp-138 contribute to the active site. Mg(2+)-binding residues include Asp-7, Glu-66, and Asp-138.

The protein belongs to the RuvC family. In terms of assembly, homodimer which binds Holliday junction (HJ) DNA. The HJ becomes 2-fold symmetrical on binding to RuvC with unstacked arms; it has a different conformation from HJ DNA in complex with RuvA. In the full resolvosome a probable DNA-RuvA(4)-RuvB(12)-RuvC(2) complex forms which resolves the HJ. Mg(2+) is required as a cofactor.

Its subcellular location is the cytoplasm. It carries out the reaction Endonucleolytic cleavage at a junction such as a reciprocal single-stranded crossover between two homologous DNA duplexes (Holliday junction).. Its function is as follows. The RuvA-RuvB-RuvC complex processes Holliday junction (HJ) DNA during genetic recombination and DNA repair. Endonuclease that resolves HJ intermediates. Cleaves cruciform DNA by making single-stranded nicks across the HJ at symmetrical positions within the homologous arms, yielding a 5'-phosphate and a 3'-hydroxyl group; requires a central core of homology in the junction. The consensus cleavage sequence is 5'-(A/T)TT(C/G)-3'. Cleavage occurs on the 3'-side of the TT dinucleotide at the point of strand exchange. HJ branch migration catalyzed by RuvA-RuvB allows RuvC to scan DNA until it finds its consensus sequence, where it cleaves and resolves the cruciform DNA. This is Crossover junction endodeoxyribonuclease RuvC from Burkholderia thailandensis (strain ATCC 700388 / DSM 13276 / CCUG 48851 / CIP 106301 / E264).